A 216-amino-acid chain; its full sequence is Ribose-5-phosphate isomerase A (216 aa).

Residues 26 to 29 (TGST), 79 to 82 (DGAD), and 92 to 95 (KGGG) contribute to the substrate site. Glutamate 101 functions as the Proton acceptor in the catalytic mechanism. Lysine 119 is a binding site for substrate.

This sequence belongs to the ribose 5-phosphate isomerase family. In terms of assembly, homodimer.

It carries out the reaction aldehydo-D-ribose 5-phosphate = D-ribulose 5-phosphate. It participates in carbohydrate degradation; pentose phosphate pathway; D-ribose 5-phosphate from D-ribulose 5-phosphate (non-oxidative stage): step 1/1. In terms of biological role, catalyzes the reversible conversion of ribose-5-phosphate to ribulose 5-phosphate. The chain is Ribose-5-phosphate isomerase A from Legionella pneumophila (strain Lens).